The following is a 942-amino-acid chain: VPS35 endosomal protein sorting factor-like (942 aa).

Belongs to the VPS35L family. In terms of assembly, component of the heterotrimeric retriever complex.

Its subcellular location is the endosome. Functionally, acts as a component of the retriever complex. The retriever complex is a heterotrimeric complex related to retromer cargo-selective complex (CSC) and essential for retromer-independent retrieval and recycling of numerous cargos. This chain is VPS35 endosomal protein sorting factor-like, found in Drosophila melanogaster (Fruit fly).